The sequence spans 447 residues: Asparagine--tRNA ligase (447 aa).

It belongs to the class-II aminoacyl-tRNA synthetase family. In terms of assembly, homodimer.

Its subcellular location is the cytoplasm. It catalyses the reaction tRNA(Asn) + L-asparagine + ATP = L-asparaginyl-tRNA(Asn) + AMP + diphosphate + H(+). This is Asparagine--tRNA ligase from Lactococcus lactis subsp. cremoris (strain MG1363).